Reading from the N-terminus, the 178-residue chain is Large ribosomal subunit protein uL6 (178 aa).

Belongs to the universal ribosomal protein uL6 family. In terms of assembly, part of the 50S ribosomal subunit.

This protein binds to the 23S rRNA, and is important in its secondary structure. It is located near the subunit interface in the base of the L7/L12 stalk, and near the tRNA binding site of the peptidyltransferase center. The protein is Large ribosomal subunit protein uL6 of Symbiobacterium thermophilum (strain DSM 24528 / JCM 14929 / IAM 14863 / T).